Consider the following 144-residue polypeptide: Large ribosomal subunit protein uL13 (144 aa).

It belongs to the universal ribosomal protein uL13 family. Part of the 50S ribosomal subunit.

In terms of biological role, this protein is one of the early assembly proteins of the 50S ribosomal subunit, although it is not seen to bind rRNA by itself. It is important during the early stages of 50S assembly. The sequence is that of Large ribosomal subunit protein uL13 from Buchnera aphidicola subsp. Baizongia pistaciae (strain Bp).